The following is a 510-amino-acid chain: NAD(P)H-quinone oxidoreductase subunit 2 B, chloroplastic (510 aa).

The next 13 helical transmembrane spans lie at 24–44 (LLLF…GLIL), 57–77 (IPWL…ALLF), 99–119 (IFQF…VEYI), 124–144 (MAIT…MFLC), 150–170 (ITIF…SGYT), 183–203 (YLLM…WLYG), 227–247 (PGIS…LSPA), 295–315 (WHLL…LIAI), 323–343 (MLAY…IVGD), 347–367 (GYAS…GTFA), 395–415 (ALSS…AGFF), 418–438 (LHLF…IGLL), and 484–504 (MIVC…IIAI).

It belongs to the complex I subunit 2 family. As to quaternary structure, NDH is composed of at least 16 different subunits, 5 of which are encoded in the nucleus.

Its subcellular location is the plastid. It localises to the chloroplast thylakoid membrane. The enzyme catalyses a plastoquinone + NADH + (n+1) H(+)(in) = a plastoquinol + NAD(+) + n H(+)(out). The catalysed reaction is a plastoquinone + NADPH + (n+1) H(+)(in) = a plastoquinol + NADP(+) + n H(+)(out). NDH shuttles electrons from NAD(P)H:plastoquinone, via FMN and iron-sulfur (Fe-S) centers, to quinones in the photosynthetic chain and possibly in a chloroplast respiratory chain. The immediate electron acceptor for the enzyme in this species is believed to be plastoquinone. Couples the redox reaction to proton translocation, and thus conserves the redox energy in a proton gradient. The polypeptide is NAD(P)H-quinone oxidoreductase subunit 2 B, chloroplastic (Chloranthus spicatus (Chulantree)).